The chain runs to 553 residues: MGIASILSNKNITINVDHVIDSDEAMLLAIGYRQELRREFSLWSIFAVSFSVLGLLPSIAACFDYQQLVVGMSPLPWLIAMIFITSVAYSMAEIASAFPCSAGTPYAVSQLAPKKYASFLTWFTCWTNWSCQITAAPSVSYSCACMMLALHSFTDPSFVASNAQIFGLTTGIQVLCAFMACFPTKWVARFSSAGTTCNIVFLVVVFIMILGGNKRDQIKEGISKFNSNSTAWGLDNQAEWPTGLSFLISFMGVIWAMSGYDSPFHLAEKCSNAAVAAPRAIVLTSTVGGLIGFMFMIAIAYTLVDLNQISADPESLGQPFVTYLTQIMDKNLVIGATALTIISSFFMAQNCLLASSRVTYAYARDGLFPLSGIWKKVSPKTQTPINAVIMNFIVEELLLLLIFGGDVSIGSIFSIGALAGFISFTMPTLLKITYARKTFQPGPWNLGKWSEPIGWVSVAFVGLMVPILCFPTVKGADLTPTEMNWTCLVYFGLILLTTIWFVVYARRWYVGPRTNISEEDIVYGEKTEDEGDEIPDVIDGQKVSISSTEKRYQ.

Helical transmembrane passes span 43 to 63, 68 to 88, 133 to 153, 163 to 183, 190 to 210, 240 to 260, 280 to 300, 333 to 353, 397 to 417, 453 to 473, and 485 to 505; these read WSIF…AACF, LVVG…TSVA, ITAA…LHSF, AQIF…ACFP, FSSA…IMIL, WPTG…MSGY, AIVL…IAIA, VIGA…NCLL, LLLL…SIGA, IGWV…FPTV, and WTCL…VVYA.

Belongs to the amino acid-polyamine-organocation (APC) superfamily.

Its subcellular location is the membrane. This is Putative polyamine transporter (GPT1) from Candida albicans (Yeast).